The sequence spans 433 residues: Cell division control protein KAR1 (433 aa).

Disordered stretches follow at residues 1–38, 69–101, and 207–227; these read MNVT…SINL, TKNI…FYNG, and KPLP…TLQR. The residue at position 233 (Thr-233) is a Phosphothreonine.

Interacts with SPC72.

Its subcellular location is the cytoplasm. It is found in the cytoskeleton. The protein resides in the microtubule organizing center. The protein localises to the spindle pole body. Its function is as follows. KAR1 is required for function of both intranuclear and extranuclear microtubules. KAR1 helps localize CDC31 to the spindle pole body (SPB), CDC31 then initiates SPB duplication via interaction with a downstream effector. This is Cell division control protein KAR1 (KAR1) from Saccharomyces cerevisiae (strain ATCC 204508 / S288c) (Baker's yeast).